The chain runs to 610 residues: Fimbrin (610 aa).

EF-hand domains follow at residues 7-42 (SEIS…CGEK) and 43-78 (VTGV…ARQH). Positions 20, 22, 24, 26, 31, 56, 58, 60, 62, and 67 each coordinate Ca(2+). 2 actin-binding regions span residues 102–365 (YSGS…NTHP) and 366–608 (ALEP…QVEM). Calponin-homology (CH) domains follow at residues 116-232 (DEEK…KIGL), 260-365 (LPVE…NTHP), 379-488 (TREE…RGHV), and 501-608 (PIAD…QVEM).

In terms of biological role, binds to actin. This is Fimbrin (fimA) from Dictyostelium discoideum (Social amoeba).